The primary structure comprises 62 residues: Cytotoxin-like basic protein (62 aa).

4 disulfide bridges follow: Cys-3-Cys-22, Cys-15-Cys-40, Cys-44-Cys-55, and Cys-56-Cys-61.

Belongs to the three-finger toxin family. Short-chain subfamily. Orphan group XV sub-subfamily. As to expression, expressed by the venom gland.

Its subcellular location is the secreted. It is found in the target cell membrane. Has low cytotoxic activity. This chain is Cytotoxin-like basic protein, found in Naja naja (Indian cobra).